We begin with the raw amino-acid sequence, 204 residues long: Large ribosomal subunit protein eL15 (204 aa).

Disordered stretches follow at residues 71–91 (RKRPVPKGATYGKPKSHGVNQ) and 159–182 (REMRGKTSAGRKHRGLGRGFHYSQ). Residues 159–174 (REMRGKTSAGRKHRGL) show a composition bias toward basic residues.

The protein belongs to the eukaryotic ribosomal protein eL15 family.

This is Large ribosomal subunit protein eL15 (RPL15) from Faxonius limosus (Spinycheek crayfish).